A 470-amino-acid polypeptide reads, in one-letter code: Glutamate--tRNA ligase (470 aa).

The 'HIGH' region motif lies at 9 to 19 (PSPTGFLHVGG). The 'KMSKS' region motif lies at 236–240 (RLSKR). K239 is a binding site for ATP.

It belongs to the class-I aminoacyl-tRNA synthetase family. Glutamate--tRNA ligase type 1 subfamily. As to quaternary structure, monomer.

It localises to the cytoplasm. It catalyses the reaction tRNA(Glu) + L-glutamate + ATP = L-glutamyl-tRNA(Glu) + AMP + diphosphate. Functionally, catalyzes the attachment of glutamate to tRNA(Glu) in a two-step reaction: glutamate is first activated by ATP to form Glu-AMP and then transferred to the acceptor end of tRNA(Glu). The protein is Glutamate--tRNA ligase of Legionella pneumophila subsp. pneumophila (strain Philadelphia 1 / ATCC 33152 / DSM 7513).